We begin with the raw amino-acid sequence, 384 residues long: Alcohol dehydrogenase class-3 (384 aa).

The Zn(2+) site is built by Cys48, His70, Cys100, Cys103, Cys106, Cys114, and Cys177.

Belongs to the zinc-containing alcohol dehydrogenase family. Class-III subfamily. As to quaternary structure, homodimer. Requires Zn(2+) as cofactor.

The protein localises to the cytoplasm. The catalysed reaction is a primary alcohol + NAD(+) = an aldehyde + NADH + H(+). It catalyses the reaction a secondary alcohol + NAD(+) = a ketone + NADH + H(+). The enzyme catalyses S-(hydroxymethyl)glutathione + NADP(+) = S-formylglutathione + NADPH + H(+). It carries out the reaction S-(hydroxymethyl)glutathione + NAD(+) = S-formylglutathione + NADH + H(+). Functionally, class-III ADH is remarkably ineffective in oxidizing ethanol, but it readily catalyzes the oxidation of long-chain primary alcohols and the oxidation of S-(hydroxymethyl) glutathione. Plays a role in the calcium flux to the cytoplasm in the ASJ sensory neurons upon removal of a nitric oxide stimulus. The polypeptide is Alcohol dehydrogenase class-3 (Caenorhabditis elegans).